Consider the following 330-residue polypeptide: DNA primase small subunit PriS (330 aa).

Catalysis depends on residues Asp-101 and Asp-103. Cys-116, Cys-119, Cys-128, and Asp-131 together coordinate Zn(2+). The active site involves Asp-235.

The protein belongs to the eukaryotic-type primase small subunit family. As to quaternary structure, heterodimer of a small subunit (PriS) and a large subunit (PriL). The cofactor is Mg(2+). Mn(2+) serves as cofactor.

In terms of biological role, catalytic subunit of DNA primase, an RNA polymerase that catalyzes the synthesis of short RNA molecules used as primers for DNA polymerase during DNA replication. The small subunit contains the primase catalytic core and has DNA synthesis activity on its own. Binding to the large subunit stabilizes and modulates the activity, increasing the rate of DNA synthesis while decreasing the length of the DNA fragments, and conferring RNA synthesis capability. The DNA polymerase activity may enable DNA primase to also catalyze primer extension after primer synthesis. May also play a role in DNA repair. This Saccharolobus islandicus (strain M.16.27) (Sulfolobus islandicus) protein is DNA primase small subunit PriS.